A 261-amino-acid polypeptide reads, in one-letter code: Carbonic anhydrase 1 (261 aa).

The disordered stretch occupies residues 1–40 (MASPDWGYDDKNGPEQWSKLYPIANGNNQSPVDIKTSETK). Position 2 is an N-acetylalanine (Ala-2). Residues 4 to 261 (PDWGYDDKNG…LKGRTVRASF (258 aa)) enclose the Alpha-carbonic anhydrase domain. Residue His-65 is the Proton donor/acceptor of the active site. The Zn(2+) site is built by His-95, His-97, and His-120. Substrate-binding positions include Thr-200 and 200–201 (TH). The segment at 241–261 (PMQHNNRPTQPLKGRTVRASF) is disordered.

The protein belongs to the alpha-carbonic anhydrase family. Zn(2+) serves as cofactor.

Its subcellular location is the cytoplasm. The enzyme catalyses hydrogencarbonate + H(+) = CO2 + H2O. It carries out the reaction urea = cyanamide + H2O. Its activity is regulated as follows. Inhibited by acetazolamide. Catalyzes the reversible hydration of carbon dioxide. Can hydrate cyanamide to urea. The sequence is that of Carbonic anhydrase 1 (CA1) from Pan troglodytes (Chimpanzee).